The primary structure comprises 505 residues: Trans-cinnamate 4-monooxygenase (505 aa).

A helical transmembrane segment spans residues 3 to 23; it reads LLLLEKSLIAVFVAVILATVI. Residues 213 to 218 and alanine 306 contribute to the (E)-cinnamate site; that span reads RSRLAQ. Cysteine 447 is a heme binding site.

Belongs to the cytochrome P450 family. Heme is required as a cofactor. As to expression, expressed in roots, leaves, stems, flowers and siliques.

It localises to the membrane. The enzyme catalyses (E)-cinnamate + reduced [NADPH--hemoprotein reductase] + O2 = (E)-4-coumarate + oxidized [NADPH--hemoprotein reductase] + H2O + H(+). It participates in phenylpropanoid metabolism; trans-4-coumarate biosynthesis; trans-4-coumarate from trans-cinnamate: step 1/1. Functionally, catalyzes the first oxidative step of the phenylpropanoid pathway in higher plants by transforming trans-cinnamate into p-coumarate. The compounds formed by this pathway are essential components for lignification, pollination, and defense against ultraviolet light, predators and pathogens. The protein is Trans-cinnamate 4-monooxygenase of Arabidopsis thaliana (Mouse-ear cress).